The sequence spans 2057 residues: Myosin heavy chain, non-muscle (2057 aa).

The Myosin N-terminal SH3-like domain occupies 78–128 (HRSVLVWVPHENQGFVAASIKREHGDEVEVELAETGKRVMILRDDIQKMNP). The Myosin motor domain maps to 132-867 (DKVEDMAELT…VLAHLEEERD (736 aa)). 225–232 (GESGAGKT) lines the ATP pocket. Positions 250 to 260 (PKGSGAVPHPA) are 25 kDa/50 kDa junction. The 50 kDa/20 kDa junction stretch occupies residues 722 to 734 (DTQFGARTRKGMF). The segment at 745-767 (LAKLMDTLRNTNPNFVRCIIPNH) is actin-binding. Residues 782-798 (QLRCNGVLEGIRICRQG) form a reactive sulfhydryl/actin-binding region. Residues 870–899 (ISDLIVNFQAFCRGFLARRNYQKRLQQLNA) enclose the IQ domain. The stretch at 926 to 2016 (KPLLEVTKQE…SLKTKLRRTG (1091 aa)) forms a coiled coil. 3 disordered regions span residues 1124-1144 (EERL…KRKI), 1782-1802 (SSER…EEIA), and 2008-2057 (LKTK…DSAN). The alpha-helical tailpiece (LMM) stretch occupies residues 1343–2010 (SQIAELQVKL…MNREINSLKT (668 aa)). The light meromyosin (LMM) stretch occupies residues 1343-2057 (SQIAELQVKL…ESLDGEDSAN (715 aa)). Basic and acidic residues predominate over residues 1782-1792 (SSERARRAAET). Positions 2011 to 2057 (KLRRTGGIGLSSSRLTGTPSSKRAGGGGGSDDSSVQDESLDGEDSAN) are globular tailpiece. S2021 and S2022 each carry phosphoserine. Over residues 2044–2057 (SVQDESLDGEDSAN) the composition is skewed to acidic residues.

This sequence belongs to the TRAFAC class myosin-kinesin ATPase superfamily. Myosin family. Interacts with sau. Interacts with ck and Ubr3. In terms of processing, ubiquitinated. As to expression, in Johnston's organ, expressed in neurons and scolopale cells.

It is found in the cell projection. The protein resides in the cilium. The protein localises to the cytoplasm. Its function is as follows. Nonmuscle myosin appears to be responsible for cellularization. Required for morphogenesis and cytokinesis. Necessary for auditory transduction: plays a role in Johnston's organ organization by acting in scolopidial apical attachment. Interaction with the myosin ck may be important for this function. Localizes to and defines the trailing edge of cells during larval epidermal wound healing. This process is dependent on the phosphatidylinositol 4-phosphate 5-kinase sktl/skittles. The polypeptide is Myosin heavy chain, non-muscle (zip) (Drosophila melanogaster (Fruit fly)).